The primary structure comprises 236 residues: CBS domain-containing protein CBSX1, chloroplastic (236 aa).

Residues 1–53 (MDAVLYSVPLSFTPLRASSSPSSPYLLLPRFLSVQPCHKFTFSRSFPSKSRIP) constitute a chloroplast transit peptide. The segment at 47-66 (PSKSRIPSASSAAGSTLMTN) is disordered. Position 54 is an N-acetylserine (Ser-54). 2 consecutive CBS domains span residues 81 to 142 (MTKK…GRTE) and 175 to 231 (MTPA…IKRS).

It is found in the plastid. The protein localises to the chloroplast. This Arabidopsis thaliana (Mouse-ear cress) protein is CBS domain-containing protein CBSX1, chloroplastic (CBSX1).